Reading from the N-terminus, the 238-residue chain is Tetraspanin-4 (238 aa).

Over 1 to 13 (MARGCLQGVKYLM) the chain is Cytoplasmic. Residues 14-34 (FAFNLLFWLGGCGVLGVGIWL) form a helical membrane-spanning segment. At 35-55 (AATQGNFATLSSSFPSLSAAN) the chain is on the extracellular side. The chain crosses the membrane as a helical span at residues 56 to 76 (LLIVTGTFVMAIGFVGCIGAL). The Cytoplasmic segment spans residues 77–85 (KENKCLLLT). The chain crosses the membrane as a helical span at residues 86–106 (FFVLLLLVFLLEATIAVLFFA). Over 107 to 201 (YSDKIDSYAQ…ETVKAWLQEN (95 aa)) the chain is Extracellular. 2 N-linked (GlcNAc...) asparagine glycosylation sites follow: Asn152 and Asn161. The helical transmembrane segment at 202–222 (LLAVGIFGLCTALVQILGLTF) threads the bilayer. Residues 223-238 (AMTMYCQVVKADTYCA) are Cytoplasmic-facing.

The protein belongs to the tetraspanin (TM4SF) family. As to quaternary structure, forms a complex with integrins.

It localises to the membrane. In Mus musculus (Mouse), this protein is Tetraspanin-4 (Tspan4).